The primary structure comprises 179 residues: uncharacterized protein (179 aa).

A helical membrane pass occupies residues 5 to 25 (MLAGIGIGVAAALGVAAVASL).

To Rickettsia 17 kDa surface antigen.

Its subcellular location is the membrane. This is an uncharacterized protein from Escherichia coli O6:H1 (strain CFT073 / ATCC 700928 / UPEC).